We begin with the raw amino-acid sequence, 97 residues long: Aspartyl/glutamyl-tRNA(Asn/Gln) amidotransferase subunit C (97 aa).

It belongs to the GatC family. Heterotrimer of A, B and C subunits.

The catalysed reaction is L-glutamyl-tRNA(Gln) + L-glutamine + ATP + H2O = L-glutaminyl-tRNA(Gln) + L-glutamate + ADP + phosphate + H(+). It carries out the reaction L-aspartyl-tRNA(Asn) + L-glutamine + ATP + H2O = L-asparaginyl-tRNA(Asn) + L-glutamate + ADP + phosphate + 2 H(+). In terms of biological role, allows the formation of correctly charged Asn-tRNA(Asn) or Gln-tRNA(Gln) through the transamidation of misacylated Asp-tRNA(Asn) or Glu-tRNA(Gln) in organisms which lack either or both of asparaginyl-tRNA or glutaminyl-tRNA synthetases. The reaction takes place in the presence of glutamine and ATP through an activated phospho-Asp-tRNA(Asn) or phospho-Glu-tRNA(Gln). This Listeria welshimeri serovar 6b (strain ATCC 35897 / DSM 20650 / CCUG 15529 / CIP 8149 / NCTC 11857 / SLCC 5334 / V8) protein is Aspartyl/glutamyl-tRNA(Asn/Gln) amidotransferase subunit C.